The primary structure comprises 370 residues: Glutamate 5-kinase (370 aa).

An ATP-binding site is contributed by lysine 13. Serine 52, aspartate 139, and asparagine 151 together coordinate substrate. ATP-binding positions include serine 171–aspartate 172 and serine 211–lysine 217. One can recognise a PUA domain in the interval lysine 275 to arginine 353.

The protein belongs to the glutamate 5-kinase family.

Its subcellular location is the cytoplasm. The catalysed reaction is L-glutamate + ATP = L-glutamyl 5-phosphate + ADP. Its pathway is amino-acid biosynthesis; L-proline biosynthesis; L-glutamate 5-semialdehyde from L-glutamate: step 1/2. Its function is as follows. Catalyzes the transfer of a phosphate group to glutamate to form L-glutamate 5-phosphate. The sequence is that of Glutamate 5-kinase from Thermus thermophilus (strain ATCC BAA-163 / DSM 7039 / HB27).